A 281-amino-acid chain; its full sequence is MESVVDGSSQSRHQSENDRLNIQHALIKSIMGGKLLMAPVNLERPDLRILDSGTAQANWLLDLAALVPTTAQLTGTDIAPEQFPPPSQRPPNMTLQKQSIFDPWNEAMLGSFDVVHQRFVLAACQSDEHGQRAVADLLALTKPGGWIELHEGNMLAIQEGEAHSAMMRFRDIAVAAWVSIGQVPDPGPRLTDWMRDAGVVDMHEEVQTIGLGAAARNQQEAEWSTELCLNMLRTIRRMTAGKGADAPSEQEFDTLEVALREELQEVGNQWYYYLAYGRRRT.

It belongs to the methyltransferase superfamily. LaeA methyltransferase family.

It functions in the pathway secondary metabolite biosynthesis. N-methyltransferase; part of the gene cluster that mediates the biosynthesis of an unusual class of epipolythiodioxopiperazines (ETPs) lacking the reactive thiol group important for toxicity. Firstly, L-tyrosine is prenylated by tcpD, before undergoing condensation with L-glycine in a reaction catalyzed by the NRPS tcpP leading to the diketopiperazine (DKP) backbone. Afterwards the alpha-carbon of tyrosine is oxidized by the cytochrome P450 tcpC to form a hydroxyl group. However, in contrast other ETP biosynthesis pathways studied so far, tcpC is not able to bishydroxylate the DKP at both alpha-carbon positions, but hydroxylates the alpha-carbon of the tyrosine part and the nitrogen of the glycine part. The next steps involve an alpha,beta-elimination reaction catalyzed by tcpI, a methylation by the methyltransferase tcpN the action of the four enzyme cascade tcpG/K/J/I. Due to a dysfunctional cytochrome P450 monooxygenase tcpC, the pathway leads to the biosynthesis of probable non-toxic metabolites lacking the reactive thiol group. The sequence is that of N-methyltransferase tcpN from Claviceps purpurea (strain 20.1) (Ergot fungus).